A 136-amino-acid polypeptide reads, in one-letter code: Group 1 truncated hemoglobin GlbN (136 aa).

His81 is a binding site for heme.

It belongs to the truncated hemoglobin family. Group I subfamily. As to quaternary structure, homodimer. The cofactor is heme.

Binds oxygen cooperatively with very high affinity because of a fast combination and a slow dissociation rate. This is Group 1 truncated hemoglobin GlbN (glbN) from Mycolicibacterium paratuberculosis (strain ATCC BAA-968 / K-10) (Mycobacterium paratuberculosis).